The sequence spans 91 residues: Small ribosomal subunit protein bS20 (91 aa).

Over residues Met1–Asn21 the composition is skewed to basic and acidic residues. Disordered stretches follow at residues Met1–Lys25 and Asn71–Asp91.

Belongs to the bacterial ribosomal protein bS20 family.

Functionally, binds directly to 16S ribosomal RNA. This is Small ribosomal subunit protein bS20 from Prosthecochloris aestuarii (strain DSM 271 / SK 413).